A 327-amino-acid polypeptide reads, in one-letter code: Acyl-CoA desaturase (327 aa).

Residues 1–39 (MPDREIKSPIWHPEPGTVEDVFDHTYKEKEGPKPPTVIV) are Cytoplasmic-facing. Residues 40–60 (WRNVILMSLLHLGALYGLFLF) traverse the membrane as a helical segment. Position 42 (Asn-42) interacts with substrate. The Lumenal segment spans residues 61–64 (PSAR). The helical transmembrane segment at 65 to 85 (ALTWIWFFGCLLFSALGITAG) threads the bilayer. At 86-184 (AHRLWSHRSY…DKVVMFQRRF (99 aa)) the chain is on the cytoplasmic side. The Fe cation site is built by His-87 and His-92. The Histidine box-1 signature appears at 87–92 (HRLWSH). Positions 115, 122, and 123 each coordinate substrate. 3 residues coordinate Fe cation: His-124, His-127, and His-128. The Histidine box-2 signature appears at 124–128 (HRVHH). Substrate contacts are provided by Arg-155 and Lys-156. Residues 185–204 (YKPSVLLMCFFVPTFVPWYV) traverse the membrane as a helical segment. Residues 205–208 (WGES) are Lumenal-facing. The chain crosses the membrane as a helical span at residues 209–230 (LWVAYFVPALLRYALVLNATWL). Position 229 (Trp-229) interacts with substrate. Over 231–327 (VNSAAHMWGN…RTGDGSHWSG (97 aa)) the chain is Cytoplasmic. Fe cation-binding residues include His-236, His-265, His-268, and His-269. Residues 265–269 (HNYHH) carry the Histidine box-3 motif.

Belongs to the fatty acid desaturase type 1 family. The cofactor is Fe(2+).

Its subcellular location is the endoplasmic reticulum membrane. The catalysed reaction is octadecanoyl-CoA + 2 Fe(II)-[cytochrome b5] + O2 + 2 H(+) = (9Z)-octadecenoyl-CoA + 2 Fe(III)-[cytochrome b5] + 2 H2O. In terms of biological role, stearoyl-CoA desaturase that utilizes O(2) and electrons from reduced cytochrome b5 to introduce the first double bond into saturated fatty acyl-CoA substrates. Has high specificity and catalyzes the insertion of a cis double bond at the delta-9 position into fatty acyl-CoA substrates including palmitoyl-CoA and stearoyl-CoA. Contributes to the biosynthesis of membrane phospholipids, cholesterol esters and triglycerides. This chain is Acyl-CoA desaturase, found in Cyprinus carpio (Common carp).